The chain runs to 702 residues: Choline transporter-like protein 5-A (702 aa).

A helical transmembrane segment spans residues 21-41; it reads VLCCVLFVIVILGYIALGTVA. The Extracellular segment spans residues 42 to 225; that stretch reads WIHGDPRKVI…KIVEDYASCW (184 aa). Asparagine 120, asparagine 173, and asparagine 180 each carry an N-linked (GlcNAc...) asparagine glycan. A helical transmembrane segment spans residues 226–246; the sequence is YWIVIGLFIALVISLIFILLL. The Cytoplasmic portion of the chain corresponds to 247–249; sequence RFT. Residues 250–270 form a helical membrane-spanning segment; sequence AGFLLWFIIFAVILLVAYGIW. At 271–308 the chain is on the extracellular side; that stretch reads HCYWEFAVLRETPGADVTISDIGFQTDLHVYLQLSQTW. The chain crosses the membrane as a helical span at residues 309–329; sequence LVFMVTLGLTEASIVLMLIFL. Over 330-334 the chain is Cytoplasmic; it reads RKRVR. The helical transmembrane segment at 335–355 threads the bilayer; the sequence is IAIALLREGSRAISYIMSALF. The Extracellular portion of the chain corresponds to 356–357; the sequence is YP. The chain crosses the membrane as a helical span at residues 358–378; sequence IITFVLLAICISYWAMTALFL. The Cytoplasmic portion of the chain corresponds to 379–443; sequence ASSGDAVYKV…RYIFILQLCN (65 aa). A helical membrane pass occupies residues 444–464; the sequence is LLVFLWLVNFTIALGQCTVAG. Over 465–498 the chain is Extracellular; it reads AFASYYWARRKPADIPPCPVFSSFSRALRYHTGS. Residues 499–519 form a helical membrane-spanning segment; sequence LAFGSLILAVVQLIRVILEYL. The Cytoplasmic segment spans residues 520-593; that stretch reads DHKLKGAHNA…RVAVLDKVTD (74 aa). A helical transmembrane segment spans residues 594–614; it reads FLLFLGKLLIAGSVGVIAFFL. The Extracellular segment spans residues 615–632; it reads FTRKIPIIQEEVPVLNYY. Residues 633 to 653 form a helical membrane-spanning segment; that stretch reads CVPLLTVILGSYLIAHSFFSV. The Cytoplasmic portion of the chain corresponds to 654–699; the sequence is YAMCVDTLFLCFCEDLERNDGTTAKPFFMSPGLKRILGKAEQSPKK.

It belongs to the CTL (choline transporter-like) family.

The protein resides in the cell membrane. It catalyses the reaction choline(out) + n H(+)(in) = choline(in) + n H(+)(out). Its function is as follows. Choline/H+ antiporter. This Danio rerio (Zebrafish) protein is Choline transporter-like protein 5-A (slc44a5a).